Consider the following 156-residue polypeptide: MNILMLTFIICGLLTRVTKGSFEPQKCWKNNVGHCRRRCLDTERYILLCRNKLSCCISIISHEYTRRPAFPVIHLEDITLDYSDVDSFTGSPVSMLNDLITFDTTKFGETMTPETNTPETTMPPSEATTPETTMPPSETATSETMPPPSQTALTHN.

Positions 1-20 (MNILMLTFIICGLLTRVTKG) are cleaved as a signal peptide. 3 disulfides stabilise this stretch: C27–C55, C35–C49, and C39–C56. Residues 68 to 156 (PAFPVIHLED…PPSQTALTHN (89 aa)) constitute a propeptide that is removed on maturation. The tract at residues 108–156 (GETMTPETNTPETTMPPSEATTPETTMPPSETATSETMPPPSQTALTHN) is disordered. Residues 109–144 (ETMTPETNTPETTMPPSEATTPETTMPPSETATSET) show a composition bias toward low complexity.

It belongs to the beta-defensin family.

Its subcellular location is the secreted. In terms of biological role, has antibacterial activity. This is Beta-defensin 125 (DEFB125) from Homo sapiens (Human).